A 205-amino-acid chain; its full sequence is Small ribosomal subunit protein mS26 (205 aa).

A mitochondrion-targeting transit peptide spans 1 to 26; sequence MLRALSTLGARPLGRPPAQFLLLARG.

The protein belongs to the mitochondrion-specific ribosomal protein mS26 family. As to quaternary structure, component of the mitochondrial ribosome small subunit (28S) which comprises a 12S rRNA and about 30 distinct proteins.

Its subcellular location is the mitochondrion. The polypeptide is Small ribosomal subunit protein mS26 (MRPS26) (Bos taurus (Bovine)).